A 360-amino-acid chain; its full sequence is Peptide chain release factor 1 (360 aa).

N5-methylglutamine is present on Q237.

Belongs to the prokaryotic/mitochondrial release factor family. Post-translationally, methylated by PrmC. Methylation increases the termination efficiency of RF1.

Its subcellular location is the cytoplasm. Its function is as follows. Peptide chain release factor 1 directs the termination of translation in response to the peptide chain termination codons UAG and UAA. The sequence is that of Peptide chain release factor 1 from Teredinibacter turnerae (strain ATCC 39867 / T7901).